The following is a 743-amino-acid chain: 1,4-alpha-glucan branching enzyme GlgB (743 aa).

Residue D423 is the Nucleophile of the active site. The active-site Proton donor is E476.

This sequence belongs to the glycosyl hydrolase 13 family. GlgB subfamily. In terms of assembly, monomer.

The catalysed reaction is Transfers a segment of a (1-&gt;4)-alpha-D-glucan chain to a primary hydroxy group in a similar glucan chain.. Its pathway is glycan biosynthesis; glycogen biosynthesis. Its function is as follows. Catalyzes the formation of the alpha-1,6-glucosidic linkages in glycogen by scission of a 1,4-alpha-linked oligosaccharide from growing alpha-1,4-glucan chains and the subsequent attachment of the oligosaccharide to the alpha-1,6 position. The chain is 1,4-alpha-glucan branching enzyme GlgB from Pseudomonas fluorescens (strain Pf0-1).